The sequence spans 500 residues: Nucleolar and spindle-associated protein 1 (500 aa).

Disordered regions lie at residues lysine 48–lysine 204, threonine 241–serine 299, valine 319–glutamate 353, and glutamate 365–lysine 500. Residues threonine 82–isoleucine 92 are compositionally biased toward basic residues. The segment covering asparagine 113–threonine 127 has biased composition (polar residues). The segment covering serine 264–arginine 274 has biased composition (low complexity). The span at threonine 276 to lysine 298 shows a compositional bias: polar residues. Over residues glutamate 323–arginine 332 the composition is skewed to basic and acidic residues. The segment covering isoleucine 380 to threonine 392 has biased composition (polar residues). A compositionally biased stretch (basic and acidic residues) spans proline 442–proline 451. Polar residues predominate over residues aspartate 452 to leucine 469.

This sequence belongs to the NUSAP family. As to quaternary structure, interacts with DNA, microtubules, ipo7, kpna2 and kpnb1. Microtubule stabilization is inhibited by ipo7 and kpna2, while microtubule bundling is inhibited by kpnb1. Active GTP-bound ran causes dissociation of ipo7 and kpnb1.

It is found in the cytoplasm. The protein resides in the nucleus. It localises to the cytoskeleton. Its subcellular location is the spindle. Functionally, microtubule-associated protein with the capacity to bundle and stabilize microtubules. May associate with chromosomes and promote the organization of meiotic or mitotic spindle microtubules around them. The chain is Nucleolar and spindle-associated protein 1 (nusap1) from Xenopus tropicalis (Western clawed frog).